The chain runs to 302 residues: MSLSGIITALVTPFDRDGAFDRDAWIRLLDMQLAGGVQGVVIAGSTGEAATLTDAEYDEMLCSAVVRVGGRVPVLAGTGLSGTAKTISQTKRAADNGAGYALVVTPPYIRPNQGGLKAHYLAVAEQGGLPVVLYNVPSRTGCDLLPETVADLAGHPNIVGIKEACASRERVQALLALRRPGFAVFSGDDSSAARSMLDGADGLVSVASNVLPSAYRHLCDLARAGERGAIDLWNARLSDFHAFCGLDSNPIPIKALLQRIGIGYGLRLPLLPLSVCHHDIADHLADQVAALEALSSRKIVTA.

Residue Thr-46 coordinates pyruvate. Catalysis depends on Tyr-134, which acts as the Proton donor/acceptor. The Schiff-base intermediate with substrate role is filled by Lys-162. Val-204 provides a ligand contact to pyruvate.

This sequence belongs to the DapA family. Homotetramer; dimer of dimers.

The protein resides in the cytoplasm. It carries out the reaction L-aspartate 4-semialdehyde + pyruvate = (2S,4S)-4-hydroxy-2,3,4,5-tetrahydrodipicolinate + H2O + H(+). It participates in amino-acid biosynthesis; L-lysine biosynthesis via DAP pathway; (S)-tetrahydrodipicolinate from L-aspartate: step 3/4. Functionally, catalyzes the condensation of (S)-aspartate-beta-semialdehyde [(S)-ASA] and pyruvate to 4-hydroxy-tetrahydrodipicolinate (HTPA). The chain is 4-hydroxy-tetrahydrodipicolinate synthase from Xylella fastidiosa (strain Temecula1 / ATCC 700964).